We begin with the raw amino-acid sequence, 323 residues long: Elongation factor P--(R)-beta-lysine ligase (323 aa).

74 to 76 (SPE) contacts substrate. ATP contacts are provided by residues 98 to 100 (RNE) and N107. Residue Y116 coordinates substrate. 242-243 (EL) provides a ligand contact to ATP. Residue E249 coordinates substrate. Residue G298 coordinates ATP.

This sequence belongs to the class-II aminoacyl-tRNA synthetase family. EpmA subfamily. Homodimer.

It catalyses the reaction D-beta-lysine + L-lysyl-[protein] + ATP = N(6)-((3R)-3,6-diaminohexanoyl)-L-lysyl-[protein] + AMP + diphosphate + H(+). Its function is as follows. With EpmB is involved in the beta-lysylation step of the post-translational modification of translation elongation factor P (EF-P). Catalyzes the ATP-dependent activation of (R)-beta-lysine produced by EpmB, forming a lysyl-adenylate, from which the beta-lysyl moiety is then transferred to the epsilon-amino group of a conserved specific lysine residue in EF-P. The protein is Elongation factor P--(R)-beta-lysine ligase of Vibrio campbellii (strain ATCC BAA-1116).